The primary structure comprises 610 residues: UvrABC system protein C (610 aa).

The region spanning 16–94 (SQPGVYRMYD…IKLYQPRYNV (79 aa)) is the GIY-YIG domain. A UVR domain is found at 204-239 (DQVLTQLIARMEKASQNLEFEEAARIRDQIQAVRRV).

The protein belongs to the UvrC family. Interacts with UvrB in an incision complex.

It is found in the cytoplasm. In terms of biological role, the UvrABC repair system catalyzes the recognition and processing of DNA lesions. UvrC both incises the 5' and 3' sides of the lesion. The N-terminal half is responsible for the 3' incision and the C-terminal half is responsible for the 5' incision. This Escherichia fergusonii (strain ATCC 35469 / DSM 13698 / CCUG 18766 / IAM 14443 / JCM 21226 / LMG 7866 / NBRC 102419 / NCTC 12128 / CDC 0568-73) protein is UvrABC system protein C.